A 255-amino-acid polypeptide reads, in one-letter code: MLATKVLQQGEADRPWLIWLHGLLGNNNEWRVIASRCPEWPSLAIDLPGHGDSVAVVCTSFDDISAQISATLQMHGIERYWLVGYSLGGRIAMYHACHGEPRGLQGVIIEGGNPGLADAAQRELRLAHDTAWAERFRREPLAQVLADWYQQPVFANLSAVHRDALIDARSDNAGAAVADMLEATSLGTQPCLAPQLQQLAVPLVVLCGADDHKFQQLTRDAGLPLRIVPQAGHNSHLANPQAFAAELRNFLVNPG.

It belongs to the AB hydrolase superfamily. MenH family. Monomer.

It carries out the reaction 5-enolpyruvoyl-6-hydroxy-2-succinyl-cyclohex-3-ene-1-carboxylate = (1R,6R)-6-hydroxy-2-succinyl-cyclohexa-2,4-diene-1-carboxylate + pyruvate. It functions in the pathway quinol/quinone metabolism; 1,4-dihydroxy-2-naphthoate biosynthesis; 1,4-dihydroxy-2-naphthoate from chorismate: step 3/7. The protein operates within quinol/quinone metabolism; menaquinone biosynthesis. Functionally, catalyzes a proton abstraction reaction that results in 2,5-elimination of pyruvate from 2-succinyl-5-enolpyruvyl-6-hydroxy-3-cyclohexene-1-carboxylate (SEPHCHC) and the formation of 2-succinyl-6-hydroxy-2,4-cyclohexadiene-1-carboxylate (SHCHC). The protein is 2-succinyl-6-hydroxy-2,4-cyclohexadiene-1-carboxylate synthase of Serratia proteamaculans (strain 568).